The following is a 167-amino-acid chain: Large ribosomal subunit protein bL9 (167 aa).

Belongs to the bacterial ribosomal protein bL9 family.

Binds to the 23S rRNA. The polypeptide is Large ribosomal subunit protein bL9 (Chlamydia muridarum (strain MoPn / Nigg)).